The primary structure comprises 683 residues: C-mannosyltransferase dpy-19 (683 aa).

The next 11 membrane-spanning stretches (helical) occupy residues 21 to 41 (SLYS…VGYI), 167 to 187 (ITGV…LGVL), 188 to 208 (VSDS…NHGE), 220 to 240 (ESFA…VIKY), 267 to 287 (FAFF…LIPF), 298 to 318 (IISF…ITAL), 319 to 339 (YFPS…LSNL), 344 to 364 (AYVL…KIGL), 413 to 433 (CGTL…FNFV), 467 to 487 (FLIM…AALF), and 502 to 522 (IRVS…IPNI).

Belongs to the dpy-19 family. As to expression, expressed faintly in neuroblasts QL and QR, more strongly in the neighboring epidermal cells (dorsal hyp7 cells, ventral P cells and lateral V cells), and in dorsal and ventral body muscle cells.

The protein resides in the endoplasmic reticulum membrane. Functionally, C-mannosyltransferase that mediates C-mannosylation of tryptophan residues on target proteins such as unc-5 and mig-21. Mediates the attachment of alpha-mannose in C-C linkage to the C2 of the indole ring of tryptophan. C-mannosylation takes place in the endoplasmic reticulum and frequently found in thrombospondin (TSP) type-1 repeats and in the WSXWS motif of type I cytokine receptors. Required to orient neuroblasts QL and QR correctly on the anterior/posterior (A/P) axis: QL and QR are born in the same A/P position, but polarize and migrate left/right asymmetrically, QL migrates toward the posterior and QR migrates toward the anterior. Required with unc-40 to express mab-5 correctly in the Q cell descendants. The polypeptide is C-mannosyltransferase dpy-19 (dpy-19) (Caenorhabditis elegans).